The chain runs to 742 residues: Two-component response regulator-like PRR37 (742 aa).

One can recognise a Response regulatory domain in the interval 63 to 181; that stretch reads KVLLVDSDDS…ELKNLWQHVW (119 aa). The span at 186–195 shows a compositional bias: low complexity; that stretch reads SSSGSGSESG. 7 disordered regions span residues 186 to 249, 290 to 346, 377 to 402, 478 to 517, 533 to 568, 590 to 671, and 697 to 742; these read SSSG…SWTK, PCTS…PLQN, QQAA…NRDN, MKSN…NKER, FHPA…GEVQ, NGGS…GNDM, and NFGK…AADR. Residues 236-248 are compositionally biased toward polar residues; the sequence is DNGSGTQAQSSWT. A compositionally biased stretch (basic and acidic residues) spans 299-313; sequence KQKETNDDFKGKDLE. The segment covering 318-330 has biased composition (polar residues); that stretch reads RNLNTAYQSSPNE. Residues 331 to 341 are compositionally biased toward basic and acidic residues; the sequence is RSIKPTDRRNE. Positions 490–502 are enriched in low complexity; it reads GSNGSSNNNDMGS. Positions 503–512 are enriched in polar residues; sequence TTKNVVTKPS. Positions 618–634 are enriched in low complexity; it reads NGSNSGSNNGSNGQNGS. Over residues 656–667 the composition is skewed to gly residues; that stretch reads GPGGGNGSGSGS. Residues 682–724 form the CCT domain; it reads RVAAVIKFRQKRKERNFGKKVRYQSRKRLAEQRPRVRGQFVRQ. The span at 697-708 shows a compositional bias: basic residues; that stretch reads NFGKKVRYQSRK. Residues 719 to 731 are compositionally biased toward low complexity; it reads GQFVRQAVQDQQQ.

It belongs to the ARR-like family.

The protein resides in the nucleus. Functionally, probable transcription factor involved in the regulation of flowering time under long day (LD) conditions. Functions as a repressor of flowering. Controls flowering time by negatively regulating the expression of HD3A. Acts downstream of the phytochrome B to repress the expression of EHD1, an activator of the flowering promoter genes HD3A and RFT1. Controls photoperiodic flowering response. Seems to be one of the component of the circadian clock. Expression of several members of the ARR-like family is controlled by circadian rhythm. The particular coordinated sequential expression of PRR73, PRR37, PRR95, PRR59 and PPR1 result to circadian waves that may be at the basis of the endogenous circadian clock. In Oryza sativa subsp. japonica (Rice), this protein is Two-component response regulator-like PRR37.